A 122-amino-acid polypeptide reads, in one-letter code: Large ribosomal subunit protein uL14 (122 aa).

It belongs to the universal ribosomal protein uL14 family. As to quaternary structure, part of the 50S ribosomal subunit. Forms a cluster with proteins L3 and L19. In the 70S ribosome, L14 and L19 interact and together make contacts with the 16S rRNA in bridges B5 and B8.

Its function is as follows. Binds to 23S rRNA. Forms part of two intersubunit bridges in the 70S ribosome. This is Large ribosomal subunit protein uL14 from Paramagnetospirillum magneticum (strain ATCC 700264 / AMB-1) (Magnetospirillum magneticum).